A 421-amino-acid chain; its full sequence is Probable N-acetylgalactosaminyltransferase 8 (421 aa).

Residues methionine 1–arginine 3 lie on the Cytoplasmic side of the membrane. A helical; Signal-anchor for type II membrane protein membrane pass occupies residues histidine 4–lysine 24. Residues leucine 25–leucine 421 lie on the Lumenal side of the membrane. Residues asparagine 52 and asparagine 58 are each glycosylated (N-linked (GlcNAc...) asparagine). Cystine bridges form between cysteine 98–cysteine 331 and cysteine 322–cysteine 399. Residues serine 106–proline 219 are catalytic subdomain A. The substrate site is built by aspartate 147 and arginine 180. Aspartate 203 provides a ligand contact to Mn(2+). Serine 204 lines the substrate pocket. Residue histidine 205 participates in Mn(2+) binding. Residues proline 277–arginine 339 are catalytic subdomain B. Substrate is bound at residue tryptophan 308. Histidine 336 is a Mn(2+) binding site. Residues arginine 339 and tyrosine 344 each contribute to the substrate site. The Prevents secretion from ER motif lies at histidine 418–leucine 421.

It belongs to the glycosyltransferase 2 family. GalNAc-T subfamily. Mn(2+) serves as cofactor.

The protein localises to the golgi apparatus membrane. It functions in the pathway protein modification; protein glycosylation. Its function is as follows. Potential glycopeptide transferase involved in O-linked oligosaccharide biosynthesis. In contrast to other members of the family, it does not act as a peptide transferase that transfers GalNAc onto serine or threonine residue on peptides that have been tested. Some peptide transferase activity is however not excluded, considering that its appropriate peptide substrate may remain unidentified. The chain is Probable N-acetylgalactosaminyltransferase 8 (gly-8) from Caenorhabditis elegans.